The chain runs to 1112 residues: Patronin (microtubule-binding protein) homolog (1112 aa).

The 122-residue stretch at 165–286 folds into the Calponin-homology (CH) domain; the sequence is IDSVDALLFW…VNAFLADLFV (122 aa). Disordered regions lie at residues 324–358, 485–504, 542–566, and 788–834; these read AARS…SRMS, EGED…QPSV, MQQQ…PSQL, and NHSE…GSGE. Polar residues-rich tracts occupy residues 345–358 and 489–504; these read SHSQ…SRMS and GTQS…QPSV. Positions 542–557 are enriched in low complexity; it reads MQQQMQQQQQQQAQAQ. The span at 802–816 shows a compositional bias: basic and acidic residues; that stretch reads QNDRDDLSTGRKSDD. Residues 850–914 are a coiled coil; it reads ALIAKTMKRK…YKRKKLEKEL (65 aa). The tract at residues 916–965 is disordered; sequence AELSARSTGRGHSQPPFIRTKSQMSEVTESSRQNTPRMRGQSSVEQRVSV. A compositionally biased stretch (polar residues) spans 935-951; the sequence is TKSQMSEVTESSRQNTP. The span at 956 to 965 shows a compositional bias: low complexity; the sequence is QSSVEQRVSV. Residues 972 to 1109 form the CKK domain; it reads THKLYAKTVT…RIPHSGTPAH (138 aa).

This sequence belongs to the CAMSAP1 family. In terms of assembly, interacts with dapk-1. Expressed in larval and adult epidermis, intestine and pharynx. Broadly expressed in the nervous system. Expressed in body wall muscle cells.

It is found in the cell projection. The protein resides in the axon. It localises to the dendrite. The protein localises to the cell membrane. Its subcellular location is the sarcolemma. It is found in the cytoplasm. The protein resides in the cytosol. It localises to the cytoskeleton. The protein localises to the perikaryon. Its function is as follows. Required for microtubule stability and anchorage by binding to the minus ends of microtubules. Acts redundantly with noca-1 to control circumferential microtubule assembly along the body which is necessary for larval development, viability, morphology and integrity of the epidermis. Promotes microtubule stability and polymerization in neurons. Involved in the maintenance of neurite morphology in ALM and PLM neurons. May play a role in synaptic protein localization in the PLM neuron. May act upstream of dlk-1 in neuronal regeneration. Plays a role in postembryonic epidermal tissue integrity and wound healing. The chain is Patronin (microtubule-binding protein) homolog from Caenorhabditis elegans.